We begin with the raw amino-acid sequence, 367 residues long: Adenine deaminase (367 aa).

Zn(2+) is bound by residues H19, H21, and H209. Residue E212 is the Proton donor of the active site. D290 is a binding site for Zn(2+). D291 serves as a coordination point for substrate.

The protein belongs to the metallo-dependent hydrolases superfamily. Adenosine and AMP deaminases family. Adenine deaminase type 2 subfamily. Zn(2+) serves as cofactor.

It is found in the cytoplasm. It localises to the nucleus. The enzyme catalyses adenine + H2O + H(+) = hypoxanthine + NH4(+). Catalyzes the hydrolytic deamination of adenine to hypoxanthine. Plays an important role in the purine salvage pathway and in nitrogen catabolism. Also exhibits a low activity towards N(6)-substituted adenines that are commonly known as the plant hormones cytokinins. This Schizosaccharomyces pombe (strain 972 / ATCC 24843) (Fission yeast) protein is Adenine deaminase.